A 146-amino-acid chain; its full sequence is Arginine repressor (146 aa).

The protein belongs to the ArgR family.

Its subcellular location is the cytoplasm. The protein operates within amino-acid biosynthesis; L-arginine biosynthesis [regulation]. In terms of biological role, regulates arginine biosynthesis genes. In Parabacteroides distasonis (strain ATCC 8503 / DSM 20701 / CIP 104284 / JCM 5825 / NCTC 11152), this protein is Arginine repressor.